The following is a 521-amino-acid chain: GMP synthase [glutamine-hydrolyzing] (521 aa).

A Glutamine amidotransferase type-1 domain is found at 5–203 (KILILDFGSQ…VHEICGCGND (199 aa)). The Nucleophile role is filled by C82. Catalysis depends on residues H177 and E179. Residues 204–396 (WNMPDYISEA…LGLPHDMVYR (193 aa)) form the GMPS ATP-PPase domain. 231–237 (SGGVDSS) is an ATP binding site.

Homodimer.

It carries out the reaction XMP + L-glutamine + ATP + H2O = GMP + L-glutamate + AMP + diphosphate + 2 H(+). It functions in the pathway purine metabolism; GMP biosynthesis; GMP from XMP (L-Gln route): step 1/1. Functionally, catalyzes the synthesis of GMP from XMP. This chain is GMP synthase [glutamine-hydrolyzing], found in Azoarcus sp. (strain BH72).